Consider the following 713-residue polypeptide: Meiotic activator RIM4 (713 aa).

Residues 1–90 (MKTEISTADS…TSTSTESRGR (90 aa)) form a disordered region. A compositionally biased stretch (basic and acidic residues) spans 21–31 (ADSELVIREDI). The span at 50–71 (GEDSDTDSDNFLQDPEDDVDEE) shows a compositional bias: acidic residues. The span at 74-90 (GRGTVTTTSTSTESRGR) shows a compositional bias: low complexity. In terms of domain architecture, RRM 1 spans 93–172 (SCIFVASLAA…RRLRCEPAKV (80 aa)). Positions 276–337 (HQNNGIINND…SDGIYDDEDK (62 aa)) are disordered. Low complexity predominate over residues 278–298 (NNGIINNDGSNNNDNNNSNNN). Basic and acidic residues predominate over residues 299–327 (NREDSRRNGDVIEEECGHVHGSDSEEKLT). One can recognise an RRM 2 domain in the interval 346-420 (RSIFVGQLDK…KTMHVQYKEV (75 aa)). Residues 524–609 (KSMPNSWSSP…KRYARRSSYG (86 aa)) are disordered. Phosphoserine is present on serine 525. Positions 526–546 (MPNSWSSPSSKSVNSENESVN) are enriched in low complexity. A compositionally biased stretch (polar residues) spans 563 to 574 (GRYNAANSFTTY). The segment covering 575–594 (NNSSAGNSNNNNNNNNSNSN) has biased composition (low complexity).

Post-translationally, polyubiquitinated by RSP5.

In terms of biological role, positive regulator of sporulation-specific genes and of sporulation. Required for premeiotic DNA synthesis and meiotic chromosomal segregation. May act in a nutritional signaling pathway. The protein is Meiotic activator RIM4 (RIM4) of Saccharomyces cerevisiae (strain ATCC 204508 / S288c) (Baker's yeast).